Reading from the N-terminus, the 203-residue chain is Translation initiation factor IF-3 (203 aa).

The protein belongs to the IF-3 family. As to quaternary structure, monomer.

Its subcellular location is the cytoplasm. Its function is as follows. IF-3 binds to the 30S ribosomal subunit and shifts the equilibrium between 70S ribosomes and their 50S and 30S subunits in favor of the free subunits, thus enhancing the availability of 30S subunits on which protein synthesis initiation begins. The polypeptide is Translation initiation factor IF-3 (Corynebacterium efficiens (strain DSM 44549 / YS-314 / AJ 12310 / JCM 11189 / NBRC 100395)).